Here is a 64-residue protein sequence, read N- to C-terminus: Prokaryotic ubiquitin-like protein UBact (64 aa).

2 stretches are compositionally biased toward basic and acidic residues: residues 1-12 (MSDLFRMEERRQ) and 33-64 (PDVK…RSGE). The interval 1–64 (MSDLFRMEER…ARRYRQRSGE (64 aa)) is disordered. E64 is covalently cross-linked (Isoglutamyl lysine isopeptide (Glu-Lys) (interchain with K-? in acceptor proteins)).

It belongs to the ubiquitin-like protein UBact family.

Functionally, may function as a protein modifier covalently attached to lysine residues of substrate proteins. This may serve to target the modified proteins for degradation by proteasomes. This Chthonomonas calidirosea (strain DSM 23976 / ICMP 18418 / T49) protein is Prokaryotic ubiquitin-like protein UBact.